Consider the following 176-residue polypeptide: GTP-dependent dephospho-CoA kinase (176 aa).

GTP is bound by residues aspartate 47, valine 48, aspartate 66, and glutamate 125.

The protein belongs to the GTP-dependent DPCK family.

It carries out the reaction 3'-dephospho-CoA + GTP = GDP + CoA + H(+). Its pathway is cofactor biosynthesis; coenzyme A biosynthesis. In terms of biological role, catalyzes the GTP-dependent phosphorylation of the 3'-hydroxyl group of dephosphocoenzyme A to form coenzyme A (CoA). The polypeptide is GTP-dependent dephospho-CoA kinase (Methanocella arvoryzae (strain DSM 22066 / NBRC 105507 / MRE50)).